Consider the following 119-residue polypeptide: Small ribosomal subunit protein bS6 (119 aa).

This sequence belongs to the bacterial ribosomal protein bS6 family.

Its function is as follows. Binds together with bS18 to 16S ribosomal RNA. This Thermosipho africanus (strain TCF52B) protein is Small ribosomal subunit protein bS6.